A 255-amino-acid polypeptide reads, in one-letter code: Hydroxyacylglutathione hydrolase (255 aa).

Zn(2+)-binding residues include His-56, His-58, Asp-60, His-61, His-114, Asp-133, and His-171.

Belongs to the metallo-beta-lactamase superfamily. Glyoxalase II family. Monomer. Requires Zn(2+) as cofactor.

It catalyses the reaction an S-(2-hydroxyacyl)glutathione + H2O = a 2-hydroxy carboxylate + glutathione + H(+). It participates in secondary metabolite metabolism; methylglyoxal degradation; (R)-lactate from methylglyoxal: step 2/2. Functionally, thiolesterase that catalyzes the hydrolysis of S-D-lactoyl-glutathione to form glutathione and D-lactic acid. This chain is Hydroxyacylglutathione hydrolase, found in Bradyrhizobium diazoefficiens (strain JCM 10833 / BCRC 13528 / IAM 13628 / NBRC 14792 / USDA 110).